A 485-amino-acid polypeptide reads, in one-letter code: MASTGLTNIQEKTTCPVCQELLTKALSLGCGHRVCQACLITKKNAVINPREKSSCPVCGTRFSLENLQANKHLANVVERLGEVKLKPDIGTKRDLCVHHGEKLLLFCKEDKKAICWVCERSQEHRGHHTFLWEEAVRECQENLQKALTRLRKEQEKVETLEADIKEDRLSWKCQVQTERQRIQTGFNQLRRILDKEEQRELKRLREEEQMILDSLAGAEAELAQQSQLVEELISDLELRREWSDTELLQDMSGILKWSQIWTLKKPKAVSKKLSMVFQAPDLSGMLQKFRELTAVRAYWDNFTFNPENLNLNLILSEDHRQVTSVSIWPFKCCNNGILGSKCFSSGKHYWEVDVSEKKAWTLGVYTRKRTLRFDVRQRKGQPNGYHRYKPQNGYWVIGLQHGSKYSIFEDSSNCDPTVLNPFVATPLHRVGVFLDCEEGTVSFLNVTNHGSLIYKFSQCCFSQPAYPYFNPWDCPAPMTLCPLNS.

An RING-type zinc finger spans residues 15–59 (CPVCQELLTKALSLGCGHRVCQACLITKKNAVINPREKSSCPVCG). The B box-type zinc finger occupies 91–132 (TKRDLCVHHGEKLLLFCKEDKKAICWVCERSQEHRGHHTFLW). Cys96, His99, Cys118, and His124 together coordinate Zn(2+). Residues 136-170 (VRECQENLQKALTRLRKEQEKVETLEADIKEDRLS) adopt a coiled-coil conformation. Positions 282–485 (LSGMLQKFRE…APMTLCPLNS (204 aa)) constitute a B30.2/SPRY domain.

The protein belongs to the TRIM/RBCC family. As to quaternary structure, homotrimer. Interacts (via B-box and SPRY domain) with TRIM5.

It is found in the cytoplasm. The protein resides in the mitochondrion. The enzyme catalyses S-ubiquitinyl-[E2 ubiquitin-conjugating enzyme]-L-cysteine + [acceptor protein]-L-lysine = [E2 ubiquitin-conjugating enzyme]-L-cysteine + N(6)-ubiquitinyl-[acceptor protein]-L-lysine.. The protein operates within protein modification; protein ubiquitination. Functions as antiviral protein and contributes to the defense against retroviral infections. Acts as a capsid-specific restriction factor with the help of TRIM5 and prevents infection from non-host-adapted retroviruses. During influenza A virus infection, promotes programmed cell death by targeting ZBP1 for 'Lys-63'-linked polyubiquitination. In turn, promotes ZBP1 recruitment of RIPK3 to mediate virus-induced programmed necrosis. Negatively regulates the function of mitochondria by enhancing mitochondrial depolarization leading to cytochrome c release and mitochondria-dependent apoptosis. Also promotes the formation of multinucleated giant cells by means of cell fusion and phagocytosis in epithelial cells. Plays an essential role in sustaining the integrity of the inner mucus layer in the colon by controlling the exocytosis of the major component of colonic mucus MUC2 from colonic goblet cells. The sequence is that of E3 ubiquitin-protein ligase TRIM34A from Mus musculus (Mouse).